Consider the following 132-residue polypeptide: Small ribosomal subunit protein uS8 (132 aa).

This sequence belongs to the universal ribosomal protein uS8 family. Part of the 30S ribosomal subunit. Contacts proteins S5 and S12.

Its function is as follows. One of the primary rRNA binding proteins, it binds directly to 16S rRNA central domain where it helps coordinate assembly of the platform of the 30S subunit. This chain is Small ribosomal subunit protein uS8, found in Mycolicibacterium gilvum (strain PYR-GCK) (Mycobacterium gilvum (strain PYR-GCK)).